The chain runs to 82 residues: Small ribosomal subunit protein bS16 (82 aa).

The protein belongs to the bacterial ribosomal protein bS16 family.

The chain is Small ribosomal subunit protein bS16 from Tolumonas auensis (strain DSM 9187 / NBRC 110442 / TA 4).